The following is a 500-amino-acid chain: E3 ubiquitin-protein ligase TRIM69 (500 aa).

Residues 1 to 152 (MEVSTNPSSN…SVGQSKEFLQ (152 aa)) are necessary for nuclear localization. Residues 41 to 82 (CPLCNDWFRDPLMLSCGHNFCEACIQDFWRLQAKETFCPECK) form an RING-type zinc finger. Residues 161–255 (TEELAIQQGQ…QCLLAKDMLV (95 aa)) adopt a coiled-coil conformation. One can recognise a B30.2/SPRY domain in the interval 305 to 500 (PIQYMVWREM…KEPLHILHPQ (196 aa)). A Phosphoserine modification is found at serine 341.

The protein belongs to the TRIM/RBCC family. Homo-multimer; required for antiviral activity. Interacts with PML. Post-translationally, phosphorylated. Phosphorylation is necessary for nuclear localization.

It localises to the cytoplasm. The protein localises to the nucleus. The protein resides in the nucleus speckle. It is found in the cytoskeleton. Its subcellular location is the microtubule organizing center. It localises to the centrosome. It carries out the reaction S-ubiquitinyl-[E2 ubiquitin-conjugating enzyme]-L-cysteine + [acceptor protein]-L-lysine = [E2 ubiquitin-conjugating enzyme]-L-cysteine + N(6)-ubiquitinyl-[acceptor protein]-L-lysine.. The protein operates within protein modification; protein ubiquitination. Functionally, E3 ubiquitin ligase that plays an important role in antiviral immunity by restricting different viral infections including dengue virus or vesicular stomatitis indiana virus. Ubiquitinates viral proteins such as dengue virus NS3 thereby limiting infection. In addition, acts as a key mediator of type I interferon induced microtubule stabilization by directly associating to microtubules independently of its E3 ligase activity. Also plays a role in cataract formation together with TP53. Mechanistically, inhibits UVB-induced cell apoptosis and reactive oxygen species (ROS) production by inducing TP53 ubiquitination. Regulates centrosome dynamics and mitotic progression by ubiquitinating STK3/MST2; leading to its redistribution to the perinuclear cytoskeleton and subsequent phosphorylation by PLK1. The chain is E3 ubiquitin-protein ligase TRIM69 (TRIM69) from Homo sapiens (Human).